The following is a 432-amino-acid chain: Adenylosuccinate synthetase (432 aa).

GTP is bound by residues 13–19 (GDEGKGK) and 41–43 (GHT). Catalysis depends on Asp14, which acts as the Proton acceptor. Mg(2+)-binding residues include Asp14 and Gly41. Residues 14-17 (DEGK), 39-42 (NAGH), Thr130, Arg144, Gln225, Thr240, and Arg304 each bind IMP. His42 acts as the Proton donor in catalysis. 300–306 (ATTGRRR) provides a ligand contact to substrate. Residues Arg306, 332–334 (KLD), and 415–417 (STG) contribute to the GTP site.

This sequence belongs to the adenylosuccinate synthetase family. As to quaternary structure, homodimer. It depends on Mg(2+) as a cofactor.

The protein localises to the cytoplasm. The enzyme catalyses IMP + L-aspartate + GTP = N(6)-(1,2-dicarboxyethyl)-AMP + GDP + phosphate + 2 H(+). It functions in the pathway purine metabolism; AMP biosynthesis via de novo pathway; AMP from IMP: step 1/2. Functionally, plays an important role in the de novo pathway of purine nucleotide biosynthesis. Catalyzes the first committed step in the biosynthesis of AMP from IMP. This Cronobacter sakazakii (strain ATCC BAA-894) (Enterobacter sakazakii) protein is Adenylosuccinate synthetase.